Consider the following 92-residue polypeptide: UPF0473 protein Cbei_1107 (92 aa).

Belongs to the UPF0473 family.

In Clostridium beijerinckii (strain ATCC 51743 / NCIMB 8052) (Clostridium acetobutylicum), this protein is UPF0473 protein Cbei_1107.